Reading from the N-terminus, the 560-residue chain is Ubiquitin carboxyl-terminal hydrolase MINDY-3 homolog (560 aa).

Residues 1-13 (MNEKIVREQRGGE) show a composition bias toward basic and acidic residues. Disordered regions lie at residues 1 to 30 (MNEK…AASA) and 44 to 91 (SHKT…MLNA). 2 stretches are compositionally biased toward low complexity: residues 15-30 (SPSS…AASA) and 52-81 (TASS…SSSS). Cysteine 139 serves as the catalytic Nucleophile. The tract at residues 203–237 (TEAGSTKKRSPAGEEESALAGQAAGSSEEVEEAAE) is disordered. Serine 212 and serine 219 each carry phosphoserine. Catalysis depends on histidine 403, which acts as the Proton acceptor.

The protein belongs to the MINDY deubiquitinase family. FAM188 subfamily.

It carries out the reaction Thiol-dependent hydrolysis of ester, thioester, amide, peptide and isopeptide bonds formed by the C-terminal Gly of ubiquitin (a 76-residue protein attached to proteins as an intracellular targeting signal).. Hydrolase that can remove 'Lys-48'-linked conjugated ubiquitin from proteins. This is Ubiquitin carboxyl-terminal hydrolase MINDY-3 homolog (mindy3) from Drosophila melanogaster (Fruit fly).